The chain runs to 268 residues: Putative S-adenosyl-L-methionine-dependent methyltransferase MAP_0663 (268 aa).

S-adenosyl-L-methionine contacts are provided by residues Asp124 and 153 to 154 (DL).

This sequence belongs to the UPF0677 family.

Its function is as follows. Exhibits S-adenosyl-L-methionine-dependent methyltransferase activity. The chain is Putative S-adenosyl-L-methionine-dependent methyltransferase MAP_0663 from Mycolicibacterium paratuberculosis (strain ATCC BAA-968 / K-10) (Mycobacterium paratuberculosis).